The chain runs to 222 residues: Uracil-DNA glycosylase (222 aa).

Catalysis depends on Asp-61, which acts as the Proton acceptor.

The protein belongs to the uracil-DNA glycosylase (UDG) superfamily. UNG family.

Its subcellular location is the cytoplasm. The catalysed reaction is Hydrolyzes single-stranded DNA or mismatched double-stranded DNA and polynucleotides, releasing free uracil.. Functionally, excises uracil residues from the DNA which can arise as a result of misincorporation of dUMP residues by DNA polymerase or due to deamination of cytosine. The protein is Uracil-DNA glycosylase of Aeromonas salmonicida (strain A449).